The chain runs to 375 residues: Protein RIC-3 (375 aa).

Residues 1-29 form the signal peptide; sequence MALSAVQKVVLFSCLVLCVSLLLPRAYIA. Over 30-90 the chain is Lumenal; it reads RGKPAAQEGN…GGGGGTRPSL (61 aa). Over residues 38-47 the composition is skewed to polar residues; the sequence is GNTGLFQSSG. The tract at residues 38 to 63 is disordered; it reads GNTGLFQSSGHHPKPTDGRPGGAHFP. Residues 91–111 traverse the membrane as a helical segment; the sequence is VGQIIPIYGFGILLYILYILF. The Cytoplasmic portion of the chain corresponds to 112–375; that stretch reads KLSSKGKSTK…RKRNTKGIEY (264 aa). The stretch at 135-165 forms a coiled coil; it reads KRKITDYELSQLQDKLKETEEAMEKIISRLG. A disordered region spans residues 251–375; that stretch reads SAEQVAEQMG…RKRNTKGIEY (125 aa). Positions 286–296 are enriched in polar residues; that stretch reads GDQQAQGTISA. A compositionally biased stretch (acidic residues) spans 305-319; the sequence is EDIEEDEDEDEDPEV. A compositionally biased stretch (basic residues) spans 365 to 375; that stretch reads LRKRNTKGIEY.

The protein belongs to the ric-3 family.

Its subcellular location is the endoplasmic reticulum membrane. In terms of biological role, molecular chaperone which facilitates proper subunit assembly andsurface trafficking of alpha-7 (CHRNA7) and alpha-8 (CHRNA8) nicotinic acetylcholine receptors. May also promote functional expression of homomeric serotoninergic 5-HT3 receptors, and of heteromeric acetylcholine receptors. The polypeptide is Protein RIC-3 (ric3) (Xenopus tropicalis (Western clawed frog)).